Here is a 430-residue protein sequence, read N- to C-terminus: Ribosomal protein uS12 methylthiotransferase RimO (430 aa).

The 118-residue stretch at 2 to 119 (ISVYSISLGC…WPAMLAHALK (118 aa)) folds into the MTTase N-terminal domain. [4Fe-4S] cluster-binding residues include C11, C46, C81, C145, C149, and C152. Positions 131–361 (STGPSYAWLK…MEVQAEISEE (231 aa)) constitute a Radical SAM core domain. The 67-residue stretch at 364 to 430 (AVHEGTRQQV…TRTYDLVALA (67 aa)) folds into the TRAM domain.

This sequence belongs to the methylthiotransferase family. RimO subfamily. It depends on [4Fe-4S] cluster as a cofactor.

The protein resides in the cytoplasm. It catalyses the reaction L-aspartate(89)-[ribosomal protein uS12]-hydrogen + (sulfur carrier)-SH + AH2 + 2 S-adenosyl-L-methionine = 3-methylsulfanyl-L-aspartate(89)-[ribosomal protein uS12]-hydrogen + (sulfur carrier)-H + 5'-deoxyadenosine + L-methionine + A + S-adenosyl-L-homocysteine + 2 H(+). Catalyzes the methylthiolation of an aspartic acid residue of ribosomal protein uS12. The chain is Ribosomal protein uS12 methylthiotransferase RimO from Nitratidesulfovibrio vulgaris (strain ATCC 29579 / DSM 644 / CCUG 34227 / NCIMB 8303 / VKM B-1760 / Hildenborough) (Desulfovibrio vulgaris).